The sequence spans 156 residues: E3 ubiquitin-protein ligase RNF181 (156 aa).

An RING-type; atypical zinc finger spans residues 79-120 (CPVCLLEFEEGETVRQLPCEHLFHSSCILPWLGKTNSCPLCR).

This sequence belongs to the RNF181 family.

The catalysed reaction is S-ubiquitinyl-[E2 ubiquitin-conjugating enzyme]-L-cysteine + [acceptor protein]-L-lysine = [E2 ubiquitin-conjugating enzyme]-L-cysteine + N(6)-ubiquitinyl-[acceptor protein]-L-lysine.. It participates in protein modification; protein ubiquitination. In terms of biological role, E3 ubiquitin-protein ligase which accepts ubiquitin from an E2 ubiquitin-conjugating enzyme in the form of a thioester and then directly transfers the ubiquitin to targeted substrates. Catalyzes monoubiquitination of 26S proteasome subunit PSMC2/RPT1. The protein is E3 ubiquitin-protein ligase RNF181 (rnf181) of Xenopus tropicalis (Western clawed frog).